The chain runs to 610 residues: Elongation factor 4 (610 aa).

In terms of domain architecture, tr-type G spans 12–194 (EKIRNFSIIA…QIVEKVPAPQ (183 aa)). GTP-binding positions include 24–29 (DHGKST) and 141–144 (NKID).

Belongs to the TRAFAC class translation factor GTPase superfamily. Classic translation factor GTPase family. LepA subfamily.

It is found in the cell membrane. The enzyme catalyses GTP + H2O = GDP + phosphate + H(+). In terms of biological role, required for accurate and efficient protein synthesis under certain stress conditions. May act as a fidelity factor of the translation reaction, by catalyzing a one-codon backward translocation of tRNAs on improperly translocated ribosomes. Back-translocation proceeds from a post-translocation (POST) complex to a pre-translocation (PRE) complex, thus giving elongation factor G a second chance to translocate the tRNAs correctly. Binds to ribosomes in a GTP-dependent manner. This chain is Elongation factor 4, found in Streptococcus thermophilus (strain ATCC BAA-250 / LMG 18311).